A 655-amino-acid polypeptide reads, in one-letter code: Mannosyl-oligosaccharide 1,2-alpha-mannosidase IA (655 aa).

At 1–43 (MPVGGLLPLFSSPGGGGLGSGLGGGLGGGRKGSGPAAFRLTEK) the chain is on the cytoplasmic side. The helical; Signal-anchor for type II membrane protein transmembrane segment at 44-64 (FVLLLVFSAFITLCFGAIFFL) threads the bilayer. Residues 65 to 655 (PDSSKLLSGV…QKKEIDGKEK (591 aa)) lie on the Lumenal side of the membrane. C478 and C510 are joined by a disulfide. N515 carries N-linked (GlcNAc...) asparagine glycosylation. The Proton donor role is filled by E524. T635 provides a ligand contact to Ca(2+).

The protein belongs to the glycosyl hydrolase 47 family. Ca(2+) is required as a cofactor. In terms of processing, N-linked glycan at Asn-515 consists of Man(6)-GlcNAc(2).

The protein localises to the golgi apparatus membrane. The enzyme catalyses N(4)-(alpha-D-Man-(1-&gt;2)-alpha-D-Man-(1-&gt;2)-alpha-D-Man-(1-&gt;3)-[alpha-D-Man-(1-&gt;2)-alpha-D-Man-(1-&gt;3)-[alpha-D-Man-(1-&gt;2)-alpha-D-Man-(1-&gt;6)]-alpha-D-Man-(1-&gt;6)]-beta-D-Man-(1-&gt;4)-beta-D-GlcNAc-(1-&gt;4)-beta-D-GlcNAc)-L-asparaginyl-[protein] (N-glucan mannose isomer 9A1,2,3B1,2,3) + 4 H2O = N(4)-(alpha-D-Man-(1-&gt;3)-[alpha-D-Man-(1-&gt;3)-[alpha-D-Man-(1-&gt;6)]-alpha-D-Man-(1-&gt;6)]-beta-D-Man-(1-&gt;4)-beta-D-GlcNAc-(1-&gt;4)-beta-D-GlcNAc)-L-asparaginyl-[protein] (N-glucan mannose isomer 5A1,2) + 4 beta-D-mannose. It catalyses the reaction N(4)-(alpha-D-Man-(1-&gt;2)-alpha-D-Man-(1-&gt;2)-alpha-D-Man-(1-&gt;3)-[alpha-D-Man-(1-&gt;3)-[alpha-D-Man-(1-&gt;2)-alpha-D-Man-(1-&gt;6)]-alpha-D-Man-(1-&gt;6)]-beta-D-Man-(1-&gt;4)-beta-D-GlcNAc-(1-&gt;4)-beta-D-GlcNAc)-L-asparaginyl-[protein] (N-glucan mannose isomer 8A1,2,3B1,3) + 3 H2O = N(4)-(alpha-D-Man-(1-&gt;3)-[alpha-D-Man-(1-&gt;3)-[alpha-D-Man-(1-&gt;6)]-alpha-D-Man-(1-&gt;6)]-beta-D-Man-(1-&gt;4)-beta-D-GlcNAc-(1-&gt;4)-beta-D-GlcNAc)-L-asparaginyl-[protein] (N-glucan mannose isomer 5A1,2) + 3 beta-D-mannose. Its pathway is protein modification; protein glycosylation. Inhibited by both 1-deoxymannojirimycin and kifunensine. In terms of biological role, involved in the maturation of Asn-linked oligosaccharides. Progressively trim alpha-1,2-linked mannose residues from Man(9)GlcNAc(2) to produce Man(5)GlcNAc(2). The protein is Mannosyl-oligosaccharide 1,2-alpha-mannosidase IA (Man1a1) of Mus musculus (Mouse).